We begin with the raw amino-acid sequence, 312 residues long: Mevalonate kinase (312 aa).

An ATP-binding site is contributed by 104–114 (PISCGLGSSAS). The active-site Proton acceptor is Asp155.

Belongs to the GHMP kinase family. Mevalonate kinase subfamily. As to quaternary structure, homodimer. Mg(2+) serves as cofactor.

It is found in the cytoplasm. It carries out the reaction (R)-mevalonate + ATP = (R)-5-phosphomevalonate + ADP + H(+). It participates in isoprenoid biosynthesis; isopentenyl diphosphate biosynthesis via mevalonate pathway; isopentenyl diphosphate from (R)-mevalonate: step 1/3. Its activity is regulated as follows. Farnesyl- and geranyl-pyrophosphates are competitive inhibitors. Slightly inhibited by high concentration of ATP. Its function is as follows. Catalyzes the phosphorylation of (R)-mevalonate (MVA) to (R)-mevalonate 5-phosphate (MVAP). Functions in the mevalonate (MVA) pathway leading to isopentenyl diphosphate (IPP), a key precursor for the biosynthesis of isoprenoid compounds such as archaeal membrane lipids. In Methanocaldococcus jannaschii (strain ATCC 43067 / DSM 2661 / JAL-1 / JCM 10045 / NBRC 100440) (Methanococcus jannaschii), this protein is Mevalonate kinase.